The primary structure comprises 102 residues: Large ribosomal subunit protein uL24 (102 aa).

The protein belongs to the universal ribosomal protein uL24 family. Part of the 50S ribosomal subunit.

One of two assembly initiator proteins, it binds directly to the 5'-end of the 23S rRNA, where it nucleates assembly of the 50S subunit. Its function is as follows. One of the proteins that surrounds the polypeptide exit tunnel on the outside of the subunit. This Burkholderia mallei (strain NCTC 10229) protein is Large ribosomal subunit protein uL24.